The primary structure comprises 567 residues: DNA ligase B (567 aa).

Lys132 acts as the N6-AMP-lysine intermediate in catalysis.

Belongs to the NAD-dependent DNA ligase family. LigB subfamily.

It carries out the reaction NAD(+) + (deoxyribonucleotide)n-3'-hydroxyl + 5'-phospho-(deoxyribonucleotide)m = (deoxyribonucleotide)n+m + AMP + beta-nicotinamide D-nucleotide.. Functionally, catalyzes the formation of phosphodiester linkages between 5'-phosphoryl and 3'-hydroxyl groups in double-stranded DNA using NAD as a coenzyme and as the energy source for the reaction. The protein is DNA ligase B of Yersinia pestis.